The following is a 388-amino-acid chain: Galactokinase (388 aa).

33 to 36 (EHTD) is a binding site for substrate. Residues Ser-67 and 124 to 130 (GAGLSSS) each bind ATP. Mg(2+) contacts are provided by Ser-130 and Glu-162. The Proton acceptor role is filled by Asp-174. Residue Tyr-224 coordinates substrate.

Belongs to the GHMP kinase family. GalK subfamily.

It localises to the cytoplasm. The enzyme catalyses alpha-D-galactose + ATP = alpha-D-galactose 1-phosphate + ADP + H(+). Its pathway is carbohydrate metabolism; galactose metabolism. Catalyzes the transfer of the gamma-phosphate of ATP to D-galactose to form alpha-D-galactose-1-phosphate (Gal-1-P). The chain is Galactokinase from Lacticaseibacillus casei (strain BL23) (Lactobacillus casei).